Reading from the N-terminus, the 147-residue chain is Large ribosomal subunit protein uL22 (147 aa).

Residues 110–147 form a disordered region; it reads EEKKTVAKKAPAAKKTTTTKAPAKKTTSTKKATAKKES. The segment covering 117–140 has biased composition (low complexity); sequence KKAPAAKKTTTTKAPAKKTTSTKK.

It belongs to the universal ribosomal protein uL22 family. As to quaternary structure, part of the 50S ribosomal subunit.

This protein binds specifically to 23S rRNA; its binding is stimulated by other ribosomal proteins, e.g. L4, L17, and L20. It is important during the early stages of 50S assembly. It makes multiple contacts with different domains of the 23S rRNA in the assembled 50S subunit and ribosome. Its function is as follows. The globular domain of the protein is located near the polypeptide exit tunnel on the outside of the subunit, while an extended beta-hairpin is found that lines the wall of the exit tunnel in the center of the 70S ribosome. The protein is Large ribosomal subunit protein uL22 of Campylobacter jejuni subsp. jejuni serotype O:23/36 (strain 81-176).